The chain runs to 386 residues: PqqA peptide cyclase (386 aa).

In terms of domain architecture, Radical SAM core spans 9-228 (SKPPLWLLAE…RQYIDQHHLK (220 aa)). [4Fe-4S] cluster contacts are provided by C23, C27, and C30.

This sequence belongs to the radical SAM superfamily. PqqE family. Interacts with PqqD. The interaction is necessary for activity of PqqE. The cofactor is [4Fe-4S] cluster.

The enzyme catalyses [PQQ precursor protein] + S-adenosyl-L-methionine = E-Y cross-linked-[PQQ precursor protein] + 5'-deoxyadenosine + L-methionine + H(+). The protein operates within cofactor biosynthesis; pyrroloquinoline quinone biosynthesis. Catalyzes the cross-linking of a glutamate residue and a tyrosine residue in the PqqA protein as part of the biosynthesis of pyrroloquinoline quinone (PQQ). This chain is PqqA peptide cyclase, found in Acinetobacter baylyi (strain ATCC 33305 / BD413 / ADP1).